The sequence spans 320 residues: Cytochrome f (320 aa).

The N-terminal stretch at 1–35 (MQNRNTFSWVKEQMTRSIFVSMMIYIITRASISNA) is a signal peptide. Residues Tyr36, Cys56, Cys59, and His60 each contribute to the heme site. The chain crosses the membrane as a helical span at residues 286-306 (IQGLFLFLASVILAQIFLVLK).

Belongs to the cytochrome f family. As to quaternary structure, the 4 large subunits of the cytochrome b6-f complex are cytochrome b6, subunit IV (17 kDa polypeptide, petD), cytochrome f and the Rieske protein, while the 4 small subunits are PetG, PetL, PetM and PetN. The complex functions as a dimer. Heme is required as a cofactor.

Its subcellular location is the plastid. The protein resides in the chloroplast thylakoid membrane. In terms of biological role, component of the cytochrome b6-f complex, which mediates electron transfer between photosystem II (PSII) and photosystem I (PSI), cyclic electron flow around PSI, and state transitions. This Amborella trichopoda protein is Cytochrome f.